The primary structure comprises 129 residues: Fluoride-specific ion channel FluC 2 (129 aa).

Transmembrane regions (helical) follow at residues 3–23, 32–52, 59–79, and 90–110; these read FLYV…MNLW, ATLA…QFLA, LVIL…FSAF, and GAWL…LIMV. Positions 71 and 74 each coordinate Na(+).

It belongs to the fluoride channel Fluc/FEX (TC 1.A.43) family.

The protein resides in the cell membrane. The catalysed reaction is fluoride(in) = fluoride(out). Na(+) is not transported, but it plays an essential structural role and its presence is essential for fluoride channel function. Its function is as follows. Fluoride-specific ion channel. Important for reducing fluoride concentration in the cell, thus reducing its toxicity. The sequence is that of Fluoride-specific ion channel FluC 2 from Listeria monocytogenes serotype 4b (strain F2365).